Here is a 227-residue protein sequence, read N- to C-terminus: Translation initiation factor 6 (227 aa).

The protein belongs to the eIF-6 family.

Its function is as follows. Binds to the 50S ribosomal subunit and prevents its association with the 30S ribosomal subunit to form the 70S initiation complex. This is Translation initiation factor 6 from Staphylothermus marinus (strain ATCC 43588 / DSM 3639 / JCM 9404 / F1).